The sequence spans 245 residues: MRVDGREKIELRHIHIHTNYLKHPEGSVLIEVGDTKVICSATIEERVPPFMRGEGKGWVTAEYAMIPRATEQRTIRESSKGKVTGRTMEIQRLIGRALRAVVDLEALGERTVWIDCDVIQADGGTRTASITGAYVAMVLAFEKLLQAEKVSKIPVKDYLAATSVGIVEEQGVVLDLNYAEDSKADVDMNVIMTGKGQFVEVQGTGEEATFSRAQLNELLDAAEQGIFQLIDMQKEALGDIVSHIE.

Phosphate is bound by residues arginine 86 and 124–126; that span reads GTR.

It belongs to the RNase PH family. As to quaternary structure, homohexameric ring arranged as a trimer of dimers.

The catalysed reaction is tRNA(n+1) + phosphate = tRNA(n) + a ribonucleoside 5'-diphosphate. In terms of biological role, phosphorolytic 3'-5' exoribonuclease that plays an important role in tRNA 3'-end maturation. Removes nucleotide residues following the 3'-CCA terminus of tRNAs; can also add nucleotides to the ends of RNA molecules by using nucleoside diphosphates as substrates, but this may not be physiologically important. Probably plays a role in initiation of 16S rRNA degradation (leading to ribosome degradation) during starvation. This is Ribonuclease PH from Bacillus cereus (strain B4264).